Here is a 173-residue protein sequence, read N- to C-terminus: Lens fiber membrane intrinsic protein (173 aa).

Residues 1 to 3 (MYS) lie on the Cytoplasmic side of the membrane. A helical membrane pass occupies residues 4–24 (FMGGGLFCAWVGTILLVVATA). The Extracellular portion of the chain corresponds to 25–66 (TDHWMQYRLSGAFAHQGLWRYCLGTKCYLQTESIAYWNATRA). Trp43 and Trp61 each carry a C-linked (Man) tryptophan; partial glycan. The chain crosses the membrane as a helical span at residues 67-87 (FMILSSLCATSGIIMGIVAFA). The Cytoplasmic segment spans residues 88–98 (QQPTFTRLSRP). A helical transmembrane segment spans residues 99 to 119 (FSAGIMFFASTFFVLLALAIY). Topologically, residues 120-140 (TGVTVSFLGRRFGDWRFSWSY) are extracellular. Residues 141–161 (ILGWVALLMTFFAGIFYMCAY) traverse the membrane as a helical segment. The Cytoplasmic segment spans residues 162–173 (RMHECRRLSTPR). Phosphoserine is present on Ser170. The residue at position 171 (Thr171) is a Phosphothreonine.

It belongs to the PMP-22/EMP/MP20 family. In terms of assembly, seems to be associated with itself or another lens membrane component via disulfide bonds. In terms of processing, predominantly monophosphorylated on Ser-170. Only about 15% diphosphorylated on both Ser-170 and Thr-171. Post-translationally, C-glycosylated. Trp-43 is more extensively C-glycosylated than Trp-61. C-glycosylation may be involved in membrane trafficking. Eye lens specific.

The protein resides in the membrane. Functionally, present in the thicker 16-17 nm junctions of mammalian lens fiber cells, where it may contribute to cell junctional organization. Acts as a receptor for calmodulin. May play an important role in both lens development and cataractogenesis. In Bos taurus (Bovine), this protein is Lens fiber membrane intrinsic protein (LIM2).